Here is a 933-residue protein sequence, read N- to C-terminus: 2-oxoglutarate dehydrogenase E1 component (933 aa).

It belongs to the alpha-ketoglutarate dehydrogenase family. Homodimer. Part of the 2-oxoglutarate dehydrogenase (OGDH) complex composed of E1 (2-oxoglutarate dehydrogenase), E2 (dihydrolipoamide succinyltransferase) and E3 (dihydrolipoamide dehydrogenase); the complex contains multiple copies of the three enzymatic components (E1, E2 and E3). It depends on thiamine diphosphate as a cofactor.

The catalysed reaction is N(6)-[(R)-lipoyl]-L-lysyl-[protein] + 2-oxoglutarate + H(+) = N(6)-[(R)-S(8)-succinyldihydrolipoyl]-L-lysyl-[protein] + CO2. Its function is as follows. E1 component of the 2-oxoglutarate dehydrogenase (OGDH) complex which catalyzes the decarboxylation of 2-oxoglutarate, the first step in the conversion of 2-oxoglutarate to succinyl-CoA and CO(2). In Rickettsia typhi (strain ATCC VR-144 / Wilmington), this protein is 2-oxoglutarate dehydrogenase E1 component (sucA).